A 122-amino-acid chain; its full sequence is Seminal vesicle secretory protein 5 (122 aa).

The N-terminal stretch at 1 to 21 (MSPTSFFLLTLLLVLVTEARG) is a signal peptide. The disordered stretch occupies residues 23–122 (RERFSQSAED…KTRVKSRILK (100 aa)). Residues 27-37 (SQSAEDPSSSH) show a composition bias toward polar residues.

The protein belongs to the SVP2/SVP5/SVP6 family. Testis.

The protein resides in the secreted. It localises to the extracellular space. In Mus musculus (Mouse), this protein is Seminal vesicle secretory protein 5 (Svs5).